The primary structure comprises 331 residues: CRISPR-associated endonuclease Cas1 1 (331 aa).

Mn(2+)-binding residues include Glu161, His226, and Glu241.

It belongs to the CRISPR-associated endonuclease Cas1 family. In terms of assembly, homodimer, forms a heterotetramer with a Cas2 homodimer. Mg(2+) is required as a cofactor. Requires Mn(2+) as cofactor.

CRISPR (clustered regularly interspaced short palindromic repeat), is an adaptive immune system that provides protection against mobile genetic elements (viruses, transposable elements and conjugative plasmids). CRISPR clusters contain spacers, sequences complementary to antecedent mobile elements, and target invading nucleic acids. CRISPR clusters are transcribed and processed into CRISPR RNA (crRNA). Acts as a dsDNA endonuclease. Involved in the integration of spacer DNA into the CRISPR cassette. This Methanospirillum hungatei JF-1 (strain ATCC 27890 / DSM 864 / NBRC 100397 / JF-1) protein is CRISPR-associated endonuclease Cas1 1.